A 449-amino-acid polypeptide reads, in one-letter code: Myb family transcription factor PHL6 (449 aa).

A disordered region spans residues proline 49–phenylalanine 72. Positions alanine 238 to tyrosine 298 constitute an HTH myb-type domain. The segment at residues proline 269 to arginine 294 is a DNA-binding region (H-T-H motif). A disordered region spans residues glutamate 301–lysine 327. Positions threonine 334–glutamine 354 are coiled coil. The LHEQLE signature appears at leucine 347–glutamate 352. Positions arginine 376–arginine 449 are disordered. The segment covering tryptophan 381 to serine 410 has biased composition (polar residues).

This sequence belongs to the MYB-CC family.

It is found in the nucleus. The polypeptide is Myb family transcription factor PHL6 (Arabidopsis thaliana (Mouse-ear cress)).